We begin with the raw amino-acid sequence, 927 residues long: Transmembrane protein 132 homolog (927 aa).

Positions 1 to 18 (MLKKLWICISCIVTTALS) are cleaved as a signal peptide. Residues 749-769 (FHIFVLTIIGLIILFLFISFV) form a helical membrane-spanning segment. A disordered region spans residues 789–842 (LSSSSGSNSRQEETNEWVWLSQPQPPSSTISSGYSGNKSTAERQSSNGDDPSRT). Over residues 817–842 (TISSGYSGNKSTAERQSSNGDDPSRT) the composition is skewed to polar residues.

This sequence belongs to the TMEM132 family. As to quaternary structure, interacts with gex-3. In terms of tissue distribution, specifically expressed in neurons.

The protein localises to the membrane. Its function is as follows. Regulates neuronal morphology via inhibition of the WAVE regulatory complex (WCR), a complex that controls F-actin cytoskeletal dynamics. This chain is Transmembrane protein 132 homolog, found in Caenorhabditis elegans.